The following is a 70-amino-acid chain: Toxin Boma6d (70 aa).

Residues 2–68 form the LCN-type CS-alpha/beta domain; the sequence is RDAYIAQNYN…VPIKVEGKCH (67 aa). 4 disulfide bridges follow: Cys12-Cys67, Cys16-Cys40, Cys22-Cys50, and Cys26-Cys52.

It belongs to the long (4 C-C) scorpion toxin superfamily. Sodium channel inhibitor family. Alpha subfamily. As to expression, expressed by the venom gland.

The protein localises to the secreted. Alpha toxins bind voltage-independently at site-3 of sodium channels (Nav) and inhibit the inactivation of the activated channels, thereby blocking neuronal transmission. The sequence is that of Toxin Boma6d from Buthus occitanus mardochei (Moroccan scorpion).